A 364-amino-acid polypeptide reads, in one-letter code: Fructose-bisphosphate aldolase B (364 aa).

A2 carries the N-acetylalanine modification. At K13 the chain carries N6-succinyllysine. S36 carries the phosphoserine modification. T39 is subject to Phosphothreonine. A beta-D-fructose 1,6-bisphosphate-binding site is contributed by R43. At S89 the chain carries Phosphoserine. T119 carries the post-translational modification Phosphothreonine. Residue K121 is modified to N6-succinyllysine. S132 is modified (phosphoserine). E188 acts as the Proton acceptor in catalysis. K230 serves as the catalytic Schiff-base intermediate with dihydroxyacetone-P. A phosphoserine mark is found at S272, S276, S299, and S301. Position 272–274 (272–274) interacts with beta-D-fructose 1,6-bisphosphate; it reads SGG. Position 304 (R304) interacts with beta-D-fructose 1,6-bisphosphate. S309 carries the phosphoserine modification. Residue K317 is modified to N6-succinyllysine.

It belongs to the class I fructose-bisphosphate aldolase family. As to quaternary structure, homotetramer. Interacts with BBS1, BBS2, BBS4 and BBS7. Forms a ternary complex with G6PD and TP53; this interaction is direct.

It is found in the cytoplasm. The protein resides in the cytosol. It localises to the cytoskeleton. The protein localises to the microtubule organizing center. Its subcellular location is the centrosome. It is found in the centriolar satellite. It catalyses the reaction beta-D-fructose 1,6-bisphosphate = D-glyceraldehyde 3-phosphate + dihydroxyacetone phosphate. The enzyme catalyses beta-D-fructose 1-phosphate = D-glyceraldehyde + dihydroxyacetone phosphate. The protein operates within carbohydrate degradation; glycolysis; D-glyceraldehyde 3-phosphate and glycerone phosphate from D-glucose: step 4/4. It participates in carbohydrate biosynthesis; gluconeogenesis. Its pathway is carbohydrate metabolism; fructose metabolism. In terms of biological role, catalyzes the aldol cleavage of fructose 1,6-biphosphate to form two triosephosphates dihydroxyacetone phosphate and D-glyceraldehyde 3-phosphate in glycolysis as well as the reverse stereospecific aldol addition reaction in gluconeogenesis. In fructolysis, metabolizes fructose 1-phosphate derived from the phosphorylation of dietary fructose by fructokinase into dihydroxyacetone phosphate and D-glyceraldehyde. Acts as an adapter independently of its enzymatic activity, exerts a tumor suppressor role by stabilizing the ternary complex with G6PD and TP53 to inhibit G6PD activity and keep oxidative pentose phosphate metabolism in check. The protein is Fructose-bisphosphate aldolase B (ALDOB) of Pongo abelii (Sumatran orangutan).